The chain runs to 303 residues: Sulfate adenylyltransferase subunit 2 (303 aa).

It belongs to the PAPS reductase family. CysD subfamily. Heterodimer composed of CysD, the smaller subunit, and CysN.

The catalysed reaction is sulfate + ATP + H(+) = adenosine 5'-phosphosulfate + diphosphate. It participates in sulfur metabolism; hydrogen sulfide biosynthesis; sulfite from sulfate: step 1/3. Functionally, with CysN forms the ATP sulfurylase (ATPS) that catalyzes the adenylation of sulfate producing adenosine 5'-phosphosulfate (APS) and diphosphate, the first enzymatic step in sulfur assimilation pathway. APS synthesis involves the formation of a high-energy phosphoric-sulfuric acid anhydride bond driven by GTP hydrolysis by CysN coupled to ATP hydrolysis by CysD. The sequence is that of Sulfate adenylyltransferase subunit 2 from Bacteroides fragilis (strain YCH46).